The following is a 379-amino-acid chain: Protein RecA (379 aa).

The segment at 1–24 is disordered; sequence MSVDVKSAQSSKSDSLQAEPRPGE. Residues 7–16 are compositionally biased toward polar residues; that stretch reads SAQSSKSDSL. 84–91 provides a ligand contact to ATP; it reads GPESSGKT.

It belongs to the RecA family.

The protein resides in the cytoplasm. Can catalyze the hydrolysis of ATP in the presence of single-stranded DNA, the ATP-dependent uptake of single-stranded DNA by duplex DNA, and the ATP-dependent hybridization of homologous single-stranded DNAs. It interacts with LexA causing its activation and leading to its autocatalytic cleavage. This Prochlorococcus marinus (strain MIT 9303) protein is Protein RecA.